The following is a 161-amino-acid chain: Ribonuclease H (161 aa).

Residues 3–144 form the RNase H type-1 domain; the sequence is GLKQISIYTD…CDDLARQAAE (142 aa). Residues aspartate 12, glutamate 50, aspartate 72, and aspartate 136 each coordinate Mg(2+). Residues 133–161 are disordered; sequence ERCDDLARQAAEAKPSQEDSGYINQQAQA. Residues 150 to 161 show a composition bias toward polar residues; sequence EDSGYINQQAQA.

Belongs to the RNase H family. Monomer. Requires Mg(2+) as cofactor.

The protein localises to the cytoplasm. It carries out the reaction Endonucleolytic cleavage to 5'-phosphomonoester.. Endonuclease that specifically degrades the RNA of RNA-DNA hybrids. In Shewanella halifaxensis (strain HAW-EB4), this protein is Ribonuclease H.